Consider the following 543-residue polypeptide: Chaperonin GroEL 1 (543 aa).

Residues 30–33, K51, 87–91, G415, and D496 contribute to the ATP site; these read TLGP and DGTTT.

This sequence belongs to the chaperonin (HSP60) family. In terms of assembly, forms a cylinder of 14 subunits composed of two heptameric rings stacked back-to-back. Interacts with the co-chaperonin GroES.

It is found in the cytoplasm. It carries out the reaction ATP + H2O + a folded polypeptide = ADP + phosphate + an unfolded polypeptide.. In terms of biological role, together with its co-chaperonin GroES, plays an essential role in assisting protein folding. The GroEL-GroES system forms a nano-cage that allows encapsulation of the non-native substrate proteins and provides a physical environment optimized to promote and accelerate protein folding. The sequence is that of Chaperonin GroEL 1 from Roseobacter denitrificans (strain ATCC 33942 / OCh 114) (Erythrobacter sp. (strain OCh 114)).